A 351-amino-acid polypeptide reads, in one-letter code: Spermidine/putrescine import ATP-binding protein PotA (351 aa).

One can recognise an ABC transporter domain in the interval 6–236; that stretch reads LELRNVTKEY…PENAWVANFI (231 aa). 38–45 contributes to the ATP binding site; it reads GPSGCGKT.

The protein belongs to the ABC transporter superfamily. Spermidine/putrescine importer (TC 3.A.1.11.1) family. In terms of assembly, the complex is composed of two ATP-binding proteins (PotA), two transmembrane proteins (PotB and PotC) and a solute-binding protein (PotD).

Its subcellular location is the cell membrane. The enzyme catalyses ATP + H2O + polyamine-[polyamine-binding protein]Side 1 = ADP + phosphate + polyamineSide 2 + [polyamine-binding protein]Side 1.. Its function is as follows. Part of the ABC transporter complex PotABCD involved in spermidine/putrescine import. Responsible for energy coupling to the transport system. This Mycoplasma mycoides subsp. mycoides SC (strain CCUG 32753 / NCTC 10114 / PG1) protein is Spermidine/putrescine import ATP-binding protein PotA.